Here is a 237-residue protein sequence, read N- to C-terminus: uncharacterized protein (237 aa).

It belongs to the bactofilin family.

This is an uncharacterized protein from Bacillus subtilis (strain 168).